The sequence spans 402 residues: Serine--glyoxylate aminotransferase (402 aa).

Lys-201 carries the N6-(pyridoxal phosphate)lysine modification.

Belongs to the class-V pyridoxal-phosphate-dependent aminotransferase family. Requires pyridoxal 5'-phosphate as cofactor.

It catalyses the reaction glyoxylate + L-serine = 3-hydroxypyruvate + glycine. The protein operates within one-carbon metabolism; formaldehyde assimilation via serine pathway. This chain is Serine--glyoxylate aminotransferase, found in Methylorubrum extorquens (strain ATCC 14718 / DSM 1338 / JCM 2805 / NCIMB 9133 / AM1) (Methylobacterium extorquens).